The primary structure comprises 1071 residues: Serine/threonine-protein phosphatase 6 regulatory ankyrin repeat subunit C (1071 aa).

ANK repeat units follow at residues 7-36 (SDQP…EVNA), 40-69 (ERRT…NVNA), 73-102 (VWLT…DVTA), 106-135 (YWQT…SLNM), 139-168 (TGRA…NLSA), 172-201 (KDRQ…DKSC), 205-234 (RGYT…EIDE), 238-267 (FGNT…NVNQ), 271-301 (RGYT…DVNM), 305-334 (EGKS…EIDC), 338-367 (YGNT…DTAR), 371-400 (HGMF…LYSI), 422-451 (FGRT…DMNK), 455-484 (FGRT…EVNE), 488-539 (SGCT…DPCL), 543-573 (KGYS…TLGD), 578-607 (GSIS…CVDV), 611-640 (VGRS…SCLL), 645-674 (SKWG…GADL), 681-710 (EGQT…CPDM), 714-743 (RGRT…SVLS), 747-776 (QGRS…HSQP), 784-814 (HGYT…SIQE), 816-845 (NPFT…CNSL), 852-881 (KGRT…DIDA), 885-915 (SGRS…DLSL), 919-951 (NKNT…LINA), and 955-984 (MLQM…TVLA).

Protein phosphatase 6 (PP6) holoenzyme is proposed to be a heterotrimeric complex formed by the catalytic subunit, a SAPS domain-containing subunit (PP6R) and an ankyrin repeat-domain containing regulatory subunit (ARS).

Its function is as follows. Putative regulatory subunit of protein phosphatase 6 (PP6) that may be involved in the recognition of phosphoprotein substrates. The protein is Serine/threonine-protein phosphatase 6 regulatory ankyrin repeat subunit C (ankrd52) of Danio rerio (Zebrafish).